We begin with the raw amino-acid sequence, 191 residues long: Programmed cell death protein 6 (191 aa).

An N-acetylalanine modification is found at Ala-2. EF-hand domains lie at Pro-23–Thr-58, Pro-59–Trp-89, Lys-90–Arg-125, Leu-126–Leu-161, and Thr-162–Val-191. Residues Asp-36, Asp-38, Ser-40, Val-42, and Glu-47 each coordinate Ca(2+). The Ca(2+) site is built by Asp-103, Asp-105, Ser-107, Met-109, and Glu-114. Residues Asp-169, Asp-171, Asp-173, and Trp-175 each contribute to the Mg(2+) site.

Homodimer and heterodimer; heterodimerizes (via the EF-hand 5) with PEF1. Isoform 1 and isoform 2 self-associate; probably forming homodimers. Interacts with CPNE4 (via VWFA domain). Interacts with PDCD6IP; the interaction is calcium-dependent. Interacts with RBM22. Interacts with PLSCR4. Interacts with ANXA7 and TSG101. Interacts with DAPK1. Interacts with SEC31A; the interaction is calcium-dependent and promotes monoubiquitination of SEC31A. Interacts with ANXA11 (via N-terminus); the interaction is calcium-dependent. Interacts with PLSCR3 (via N-terminus); the interaction is calcium-dependent. Interacts with MCOLN1; the interaction is calcium-dependent. Interacts with KDR; the interaction is calcium-dependent. Interacts with HEBP2; the interaction is calcium-dependent. Interacts with TFG. Isoform 1: Interacts with SHISA5, leading to stabilize it. Isoform 2: Does not interact with SHISA5. Isoform 2: Does not interact with PDCD6IP, TSG101, ANXA7 and ANXA11.

The protein resides in the endoplasmic reticulum membrane. It localises to the cytoplasmic vesicle. It is found in the COPII-coated vesicle membrane. Its subcellular location is the cytoplasm. The protein localises to the nucleus. The protein resides in the endosome. Its function is as follows. Calcium sensor that plays a key role in processes such as endoplasmic reticulum (ER)-Golgi vesicular transport, endosomal biogenesis or membrane repair. Acts as an adapter that bridges unrelated proteins or stabilizes weak protein-protein complexes in response to calcium: calcium-binding triggers exposure of apolar surface, promoting interaction with different sets of proteins thanks to 3 different hydrophobic pockets, leading to translocation to membranes. Involved in ER-Golgi transport by promoting the association between PDCD6IP and TSG101, thereby bridging together the ESCRT-III and ESCRT-I complexes. Together with PEF1, acts as a calcium-dependent adapter for the BCR(KLHL12) complex, a complex involved in ER-Golgi transport by regulating the size of COPII coats. In response to cytosolic calcium increase, the heterodimer formed with PEF1 interacts with, and bridges together the BCR(KLHL12) complex and SEC31 (SEC31A or SEC31B), promoting monoubiquitination of SEC31 and subsequent collagen export, which is required for neural crest specification. Involved in the regulation of the distribution and function of MCOLN1 in the endosomal pathway. Promotes localization and polymerization of TFG at endoplasmic reticulum exit site. Required for T-cell receptor-, Fas-, and glucocorticoid-induced apoptosis. May mediate Ca(2+)-regulated signals along the death pathway: interaction with DAPK1 can accelerate apoptotic cell death by increasing caspase-3 activity. Its role in apoptosis may however be indirect, as suggested by knockout experiments. May inhibit KDR/VEGFR2-dependent angiogenesis; the function involves inhibition of VEGF-induced phosphorylation of the Akt signaling pathway. Has a lower Ca(2+) affinity than isoform 1. This is Programmed cell death protein 6 (Pdcd6) from Mus musculus (Mouse).